The sequence spans 485 residues: D-alanine--D-alanyl carrier protein ligase (485 aa).

144 to 145 is a binding site for ATP; sequence TS. Aspartate 189 is a D-alanine binding site. Residue 284-289 coordinates ATP; that stretch reads NTYGPT. A D-alanine-binding site is contributed by valine 293. ATP-binding residues include aspartate 365 and lysine 473. Residue lysine 473 coordinates D-alanine.

It belongs to the ATP-dependent AMP-binding enzyme family. DltA subfamily.

It is found in the cytoplasm. The catalysed reaction is holo-[D-alanyl-carrier protein] + D-alanine + ATP = D-alanyl-[D-alanyl-carrier protein] + AMP + diphosphate. The protein operates within cell wall biogenesis; lipoteichoic acid biosynthesis. Its function is as follows. Catalyzes the first step in the D-alanylation of lipoteichoic acid (LTA), the activation of D-alanine and its transfer onto the D-alanyl carrier protein (Dcp) DltC. In an ATP-dependent two-step reaction, forms a high energy D-alanyl-AMP intermediate, followed by transfer of the D-alanyl residue as a thiol ester to the phosphopantheinyl prosthetic group of the Dcp. D-alanylation of LTA plays an important role in modulating the properties of the cell wall in Gram-positive bacteria, influencing the net charge of the cell wall. This Staphylococcus epidermidis (strain ATCC 35984 / DSM 28319 / BCRC 17069 / CCUG 31568 / BM 3577 / RP62A) protein is D-alanine--D-alanyl carrier protein ligase.